The chain runs to 270 residues: ATP synthase subunit a (270 aa).

Helical transmembrane passes span 38-58 (VHIDSLFFSWFTGLIFLGIFY), 98-118 (IAPLALTIFCWVFLMNVMDLV), 143-163 (DVNITMAMALGVFALMIYYSI), 208-228 (LFGNMFAGEVVFILCAAMLPW), and 239-259 (AIFHILVITIQAFVFMMLTIV).

The protein belongs to the ATPase A chain family. In terms of assembly, F-type ATPases have 2 components, CF(1) - the catalytic core - and CF(0) - the membrane proton channel. CF(1) has five subunits: alpha(3), beta(3), gamma(1), delta(1), epsilon(1). CF(0) has three main subunits: a(1), b(2) and c(9-12). The alpha and beta chains form an alternating ring which encloses part of the gamma chain. CF(1) is attached to CF(0) by a central stalk formed by the gamma and epsilon chains, while a peripheral stalk is formed by the delta and b chains.

The protein localises to the cell inner membrane. In terms of biological role, key component of the proton channel; it plays a direct role in the translocation of protons across the membrane. The sequence is that of ATP synthase subunit a from Vibrio alginolyticus.